We begin with the raw amino-acid sequence, 458 residues long: ATP synthase subunit beta (458 aa).

An ATP-binding site is contributed by glycine 148–threonine 155.

The protein belongs to the ATPase alpha/beta chains family. F-type ATPases have 2 components, CF(1) - the catalytic core - and CF(0) - the membrane proton channel. CF(1) has five subunits: alpha(3), beta(3), gamma(1), delta(1), epsilon(1). CF(0) has three main subunits: a(1), b(2) and c(9-12). The alpha and beta chains form an alternating ring which encloses part of the gamma chain. CF(1) is attached to CF(0) by a central stalk formed by the gamma and epsilon chains, while a peripheral stalk is formed by the delta and b chains.

The protein localises to the cell inner membrane. The catalysed reaction is ATP + H2O + 4 H(+)(in) = ADP + phosphate + 5 H(+)(out). Produces ATP from ADP in the presence of a proton gradient across the membrane. The catalytic sites are hosted primarily by the beta subunits. The chain is ATP synthase subunit beta from Stutzerimonas stutzeri (strain A1501) (Pseudomonas stutzeri).